A 249-amino-acid polypeptide reads, in one-letter code: MAGHSKWATTKHKKAVIDARRGKLFAKLIKNIEVAARTGGGDPDGNPTLYDAIQKAKKNSVPLDNIERARKRGAGEEAGGADWETIMYEGYAPGGVALLVECLTDNRNRAASEVRVAVTRNGGSMADAGSVSYLFNRKGLVVVPKEGTTEDDVTLAVLDAGAEDVNDVGEAFEVICEPSDLVAVRTALQEAGIEYESAELSFIPSVEVPLDEEGARKVMRLVDALEDSDDVQNVYTNADIPDEIMAKIS.

It belongs to the TACO1 family.

It is found in the cytoplasm. This chain is Probable transcriptional regulatory protein Tfu_2096, found in Thermobifida fusca (strain YX).